Reading from the N-terminus, the 285-residue chain is Small ribosomal subunit protein uS3 (285 aa).

One can recognise a KH type-2 domain in the interval 39–107 (VREFLKKKLK…PVAVNIEEVR (69 aa)). Residues 211 to 285 (GDAPVMRGED…RAAPPAAKGE (75 aa)) form a disordered region. Positions 217-241 (RGEDRPEDDRRRRNPRGDRPGDRRG) are enriched in basic and acidic residues. Residues 242 to 255 (PGAGRGGPGAGRGP) show a composition bias toward gly residues. Low complexity-rich tracts occupy residues 256–267 (ADGASAAPSGDA) and 276–285 (RAAPPAAKGE).

The protein belongs to the universal ribosomal protein uS3 family. As to quaternary structure, part of the 30S ribosomal subunit. Forms a tight complex with proteins S10 and S14.

In terms of biological role, binds the lower part of the 30S subunit head. Binds mRNA in the 70S ribosome, positioning it for translation. The protein is Small ribosomal subunit protein uS3 of Leptothrix cholodnii (strain ATCC 51168 / LMG 8142 / SP-6) (Leptothrix discophora (strain SP-6)).